The sequence spans 1070 residues: DNA-directed RNA polymerase subunit beta (1070 aa).

It belongs to the RNA polymerase beta chain family. In plastids the minimal PEP RNA polymerase catalytic core is composed of four subunits: alpha, beta, beta', and beta''. When a (nuclear-encoded) sigma factor is associated with the core the holoenzyme is formed, which can initiate transcription.

Its subcellular location is the plastid. The protein resides in the chloroplast. It carries out the reaction RNA(n) + a ribonucleoside 5'-triphosphate = RNA(n+1) + diphosphate. DNA-dependent RNA polymerase catalyzes the transcription of DNA into RNA using the four ribonucleoside triphosphates as substrates. This Liriodendron tulipifera (Tuliptree) protein is DNA-directed RNA polymerase subunit beta.